Reading from the N-terminus, the 175-residue chain is Crossover junction endodeoxyribonuclease RuvC (175 aa).

Catalysis depends on residues Asp-8, Glu-67, and Asp-139. 3 residues coordinate Mg(2+): Asp-8, Glu-67, and Asp-139.

The protein belongs to the RuvC family. In terms of assembly, homodimer which binds Holliday junction (HJ) DNA. The HJ becomes 2-fold symmetrical on binding to RuvC with unstacked arms; it has a different conformation from HJ DNA in complex with RuvA. In the full resolvosome a probable DNA-RuvA(4)-RuvB(12)-RuvC(2) complex forms which resolves the HJ. Mg(2+) serves as cofactor.

Its subcellular location is the cytoplasm. The enzyme catalyses Endonucleolytic cleavage at a junction such as a reciprocal single-stranded crossover between two homologous DNA duplexes (Holliday junction).. In terms of biological role, the RuvA-RuvB-RuvC complex processes Holliday junction (HJ) DNA during genetic recombination and DNA repair. Endonuclease that resolves HJ intermediates. Cleaves cruciform DNA by making single-stranded nicks across the HJ at symmetrical positions within the homologous arms, yielding a 5'-phosphate and a 3'-hydroxyl group; requires a central core of homology in the junction. The consensus cleavage sequence is 5'-(A/T)TT(C/G)-3'. Cleavage occurs on the 3'-side of the TT dinucleotide at the point of strand exchange. HJ branch migration catalyzed by RuvA-RuvB allows RuvC to scan DNA until it finds its consensus sequence, where it cleaves and resolves the cruciform DNA. This Marinobacter nauticus (strain ATCC 700491 / DSM 11845 / VT8) (Marinobacter aquaeolei) protein is Crossover junction endodeoxyribonuclease RuvC.